The chain runs to 396 residues: MKTLPLLLLLLLDLGQAQGTLDRVPLRRQPSLRKKLRAQGQLSEFWKAHKVDMVQYTETCTMEQSANEPLINYLDMEYFGTISIGSPPQNFTVIFDTVSSNLWVPSVYCTSPACQMHPQFRPSQSNTYSEVGTPFSIAYGTGSLTGIIGADQVSVQGLTVVGQQFGESVKEPGQTFVNAEFDGILGLGYPSLAAGGVTPVFDNMMAQNLVSLPMFSVYMSSNPEGGSGSELTFGGYDSSHFSGSLNWVPVTKQGYWQIALDEIQVGGSPMFCPEGCQAIVDTGTSLITGPSDKIIQLQAAIGATPMDGEYAVECENLNIMPDVTFVINGVPYTLSATAYTLPDFVDGMQFCGSGFQGLDIQPPAGPLWILGDVFIRQFYSVFDRGSNRVGLAPAVP.

The signal sequence occupies residues 1-19; it reads MKTLPLLLLLLLDLGQAQG. Residues 20-53 constitute a propeptide, activation peptide; it reads TLDRVPLRRQPSLRKKLRAQGQLSEFWKAHKVDM. The region spanning 78–392 is the Peptidase A1 domain; sequence YFGTISIGSP…DRGSNRVGLA (315 aa). Asn-90 is a glycosylation site (N-linked (GlcNAc...) asparagine). Residue Asp-96 is part of the active site. Cystine bridges form between Cys-109–Cys-114 and Cys-272–Cys-276. Residue Asp-281 is part of the active site. Cys-314 and Cys-351 are oxidised to a cystine.

The protein belongs to the peptidase A1 family. In terms of assembly, homodimer; disulfide-linked. Post-translationally, glycosylated. The nature of the carbohydrate chain varies between cell types.

It localises to the endosome. It carries out the reaction Similar to cathepsin D, but slightly broader specificity.. Functionally, may have a role in immune function. Probably involved in the processing of antigenic peptides during MHC class II-mediated antigen presentation. May play a role in activation-induced lymphocyte depletion in the thymus, and in neuronal degeneration and glial cell activation in the brain. The protein is Cathepsin E (CTSE) of Oryctolagus cuniculus (Rabbit).